The sequence spans 137 residues: Envelope glycoprotein L (137 aa).

The signal sequence occupies residues 1-22 (MRAVGVFLAICLVTIFVLPTWG). The tract at residues 23–128 (NWAYPCCHVT…SVEDLFGANL (106 aa)) is interaction with gH. 2 disulfide bridges follow: Cys-28-Cys-56 and Cys-29-Cys-79.

Belongs to the herpesviridae glycoprotein L family. As to quaternary structure, interacts with glycoprotein H (gH); this interaction is necessary for the correct processing and cell surface expression of gH. The heterodimer gH/gL seems to interact with gB trimers during fusion. The heterodimer gH/gL interacts with host EPHA2 to facilitate virus internalization and fusion.

The protein localises to the virion membrane. It localises to the host cell membrane. Its subcellular location is the host Golgi apparatus. It is found in the host trans-Golgi network. The heterodimer glycoprotein H-glycoprotein L is required for the fusion of viral and plasma membranes leading to virus entry into the host cell. Acts as a functional inhibitor of gH and maintains gH in an inhibited form. Upon binding to host integrins, gL dissociates from gH leading to activation of the viral fusion glycoproteins gB and gH. Fusion of EBV with B-lymphocytes requires the additional receptor-binding protein gp42, which forms a complex with gH/gL. The heterodimer gH/gL targets also host EPHA2 to promote viral entry. This is Envelope glycoprotein L from Homo sapiens (Human).